A 174-amino-acid polypeptide reads, in one-letter code: Mytilin-3 (174 aa).

The N-terminal stretch at 1-16 (MLKGIILIVTIQLVNA) is a signal peptide.

Component of the organic matrix of calcified shell layers like nacre and prisms.

It is found in the secreted. The sequence is that of Mytilin-3 from Mytilus californianus (California mussel).